Here is a 240-residue protein sequence, read N- to C-terminus: Glutathione S-transferase omega-1 (240 aa).

Serine 2 carries the post-translational modification N-acetylserine. The GST N-terminal domain maps to 22–101; it reads GQIRVYSMRF…YLDEAYPEKK (80 aa). Residue cysteine 32 is the Nucleophile of the active site. Position 57 is an N6-acetyllysine (lysine 57). Glutathione-binding positions include lysine 59, valine 72, and 85 to 86; that span reads ES. A GST C-terminal domain is found at 106–227; the sequence is DPYKKARQKM…AKTYREYLNL (122 aa). Serine 129 carries the post-translational modification Phosphoserine. Lysine 152 carries the N6-acetyllysine modification.

This sequence belongs to the GST superfamily. Omega family. In terms of assembly, homodimer.

The protein resides in the cytoplasm. It is found in the cytosol. The enzyme catalyses RX + glutathione = an S-substituted glutathione + a halide anion + H(+). It carries out the reaction L-dehydroascorbate + 2 glutathione = glutathione disulfide + L-ascorbate. The catalysed reaction is methylarsonate + 2 glutathione + H(+) = methylarsonous acid + glutathione disulfide + H2O. In terms of biological role, exhibits glutathione-dependent thiol transferase and dehydroascorbate reductase activities. Has S-(phenacyl)glutathione reductase activity. Also has glutathione S-transferase activity. Participates in the biotransformation of inorganic arsenic and reduces monomethylarsonic acid (MMA) and dimethylarsonic acid. This Mus musculus (Mouse) protein is Glutathione S-transferase omega-1 (Gsto1).